Reading from the N-terminus, the 131-residue chain is uncharacterized protein (131 aa).

The tract at residues 101–131 is disordered; that stretch reads SWWPPSGVVRGGPSSWPPSGVAEPREALGLP.

This is an uncharacterized protein from Homo sapiens (Human).